The primary structure comprises 376 residues: MRYADPSANRDLLGNRTLLFIFICAFALVTLLQQILYGRNYIKRYFEFYEGPFEYNSTRCLELRHEILEVKVLSMVKQSELFDRWKSLQMCKWAMNISEANQFKSTLSRCCNAPAFLFTTQKNTPLGTKLKYEVDTSGIYHINQEIFRMFPKDMPYYRSQFKKCAVVGNGGILKNSRCGREINSADFVFRCNLPPISEKYTMDVGVKTDVVTVNPSIITERFHKLEKWRRPFYRVLQVYENASVLLPAFYNTRNTDVSIRVKYVLDDFESPQAVYYFHPQYLVNVSRYWLSLGVRAKRISTGLILVTAALELCEEVHLFGFWAFPMNPSGLYITHHYYDNVKPRPGFHAMPSEIFNFLHLHSRGILRVHTGTCSCC.

The Cytoplasmic segment spans residues 1 to 17 (MRYADPSANRDLLGNRT). A helical; Signal-anchor for type II membrane protein membrane pass occupies residues 18-38 (LLFIFICAFALVTLLQQILYG). The Lumenal segment spans residues 39 to 376 (RNYIKRYFEF…RVHTGTCSCC (338 aa)). Residues Asn-56 and Asn-96 are each glycosylated (N-linked (GlcNAc...) asparagine). 2 disulfide bridges follow: Cys-164–Cys-313 and Cys-178–Cys-373. Substrate contacts are provided by residues Asn-192 and 214–216 (NPS). 2 N-linked (GlcNAc...) asparagine glycosylation sites follow: Asn-241 and Asn-284. A substrate-binding site is contributed by 300–302 (STG). The active-site Proton donor/acceptor is the His-348.

The protein belongs to the glycosyltransferase 29 family.

It localises to the golgi apparatus membrane. It catalyses the reaction a ganglioside GQ1c (d18:1(4E)) + CMP-N-acetyl-beta-neuraminate = a ganglioside GP1c (d18:1(4E)) + CMP + H(+). It participates in protein modification; protein glycosylation. Involved in the synthesis of gangliosides GD1c, GT1a, GQ1b, GP1c and GT3 from GD1a, GT1b, GM1b and GD3 respectively. The chain is Alpha-2,8-sialyltransferase 8E (ST8SIA5) from Pan troglodytes (Chimpanzee).